Here is a 215-residue protein sequence, read N- to C-terminus: Urease accessory protein UreG 2 (215 aa).

Residue glycine 11–threonine 18 participates in GTP binding.

This sequence belongs to the SIMIBI class G3E GTPase family. UreG subfamily. As to quaternary structure, homodimer. UreD, UreF and UreG form a complex that acts as a GTP-hydrolysis-dependent molecular chaperone, activating the urease apoprotein by helping to assemble the nickel containing metallocenter of UreC. The UreE protein probably delivers the nickel.

It localises to the cytoplasm. Its function is as follows. Facilitates the functional incorporation of the urease nickel metallocenter. This process requires GTP hydrolysis, probably effectuated by UreG. In Methylorubrum populi (strain ATCC BAA-705 / NCIMB 13946 / BJ001) (Methylobacterium populi), this protein is Urease accessory protein UreG 2.